The chain runs to 131 residues: Fluoride-specific ion channel FluC 2 (131 aa).

4 consecutive transmembrane segments (helical) span residues 5 to 25 (FGVA…SLLV), 39 to 59 (LATL…TTLA), 70 to 90 (LAVG…AWES), and 104 to 124 (LYVL…RALA). Na(+) is bound by residues glycine 78 and threonine 81.

The protein belongs to the fluoride channel Fluc/FEX (TC 1.A.43) family.

Its subcellular location is the cell membrane. It catalyses the reaction fluoride(in) = fluoride(out). With respect to regulation, na(+) is not transported, but it plays an essential structural role and its presence is essential for fluoride channel function. Its function is as follows. Fluoride-specific ion channel. Important for reducing fluoride concentration in the cell, thus reducing its toxicity. The polypeptide is Fluoride-specific ion channel FluC 2 (Deinococcus geothermalis (strain DSM 11300 / CIP 105573 / AG-3a)).